Reading from the N-terminus, the 120-residue chain is Chaperonin GroEL (120 aa).

23–27 (DGTTT) provides a ligand contact to ATP.

Belongs to the chaperonin (HSP60) family. Forms a cylinder of 14 subunits composed of two heptameric rings stacked back-to-back. Interacts with the co-chaperonin GroES.

It is found in the cytoplasm. It carries out the reaction ATP + H2O + a folded polypeptide = ADP + phosphate + an unfolded polypeptide.. Functionally, together with its co-chaperonin GroES, plays an essential role in assisting protein folding. The GroEL-GroES system forms a nano-cage that allows encapsulation of the non-native substrate proteins and provides a physical environment optimized to promote and accelerate protein folding. This chain is Chaperonin GroEL, found in Mycolicibacterium fallax (Mycobacterium fallax).